The chain runs to 218 residues: Small ribosomal subunit protein uS3c (218 aa).

The KH type-2 domain maps to 43–118 (IKNYVQKNTR…KLNIAITRIG (76 aa)).

The protein belongs to the universal ribosomal protein uS3 family. In terms of assembly, part of the 30S ribosomal subunit.

The protein localises to the plastid. Its subcellular location is the chloroplast. The sequence is that of Small ribosomal subunit protein uS3c (rps3) from Gossypium barbadense (Sea Island cotton).